Consider the following 437-residue polypeptide: 3-phosphoshikimate 1-carboxyvinyltransferase (437 aa).

3 residues coordinate 3-phosphoshikimate: lysine 26, serine 27, and arginine 31. Residue lysine 26 coordinates phosphoenolpyruvate. The phosphoenolpyruvate site is built by glycine 99 and arginine 127. 3-phosphoshikimate contacts are provided by serine 172, glutamine 174, aspartate 320, and lysine 347. Residue glutamine 174 participates in phosphoenolpyruvate binding. Aspartate 320 (proton acceptor) is an active-site residue. Arginine 351 and arginine 392 together coordinate phosphoenolpyruvate.

Belongs to the EPSP synthase family. As to quaternary structure, monomer.

The protein resides in the cytoplasm. It catalyses the reaction 3-phosphoshikimate + phosphoenolpyruvate = 5-O-(1-carboxyvinyl)-3-phosphoshikimate + phosphate. It functions in the pathway metabolic intermediate biosynthesis; chorismate biosynthesis; chorismate from D-erythrose 4-phosphate and phosphoenolpyruvate: step 6/7. Functionally, catalyzes the transfer of the enolpyruvyl moiety of phosphoenolpyruvate (PEP) to the 5-hydroxyl of shikimate-3-phosphate (S3P) to produce enolpyruvyl shikimate-3-phosphate and inorganic phosphate. This chain is 3-phosphoshikimate 1-carboxyvinyltransferase, found in Methylococcus capsulatus (strain ATCC 33009 / NCIMB 11132 / Bath).